A 228-amino-acid polypeptide reads, in one-letter code: DNA mismatch repair protein MutH (228 aa).

Belongs to the MutH family.

Its subcellular location is the cytoplasm. In terms of biological role, sequence-specific endonuclease that cleaves unmethylated GATC sequences. It is involved in DNA mismatch repair. The polypeptide is DNA mismatch repair protein MutH (Serratia proteamaculans (strain 568)).